The primary structure comprises 122 residues: Large ribosomal subunit protein uL14 (122 aa).

This sequence belongs to the universal ribosomal protein uL14 family. In terms of assembly, part of the 50S ribosomal subunit. Forms a cluster with proteins L3 and L19. In the 70S ribosome, L14 and L19 interact and together make contacts with the 16S rRNA in bridges B5 and B8.

In terms of biological role, binds to 23S rRNA. Forms part of two intersubunit bridges in the 70S ribosome. The protein is Large ribosomal subunit protein uL14 of Gluconobacter oxydans (strain 621H) (Gluconobacter suboxydans).